Here is a 158-residue protein sequence, read N- to C-terminus: Phosphopantetheine adenylyltransferase (158 aa).

Threonine 9 contacts substrate. ATP is bound by residues 9 to 10 and histidine 17; that span reads TF. Positions 41, 73, and 87 each coordinate substrate. ATP-binding positions include 88-90, glutamate 98, and 123-129; these read GVR and WSYVSST.

The protein belongs to the bacterial CoaD family. In terms of assembly, homohexamer. Requires Mg(2+) as cofactor.

Its subcellular location is the cytoplasm. The enzyme catalyses (R)-4'-phosphopantetheine + ATP + H(+) = 3'-dephospho-CoA + diphosphate. It participates in cofactor biosynthesis; coenzyme A biosynthesis; CoA from (R)-pantothenate: step 4/5. Its function is as follows. Reversibly transfers an adenylyl group from ATP to 4'-phosphopantetheine, yielding dephospho-CoA (dPCoA) and pyrophosphate. The sequence is that of Phosphopantetheine adenylyltransferase from Pasteurella multocida (strain Pm70).